We begin with the raw amino-acid sequence, 278 residues long: Small ribosomal subunit protein uS2 (278 aa).

Serine 2 carries the post-translational modification N-acetylserine. The disordered stretch occupies residues 258-278 (TNEGKTAADEWATGAQTQSNW).

The protein belongs to the universal ribosomal protein uS2 family. Component of the small ribosomal subunit. Mature ribosomes consist of a small (40S) and a large (60S) subunit. The 40S subunit contains about 33 different proteins and 1 molecule of RNA (18S). The 60S subunit contains about 49 different proteins and 3 molecules of RNA (28S, 5.8S and 5S). Interacts with rps-21.

The protein resides in the cytoplasm. Its function is as follows. Required for the assembly and/or stability of the 40S ribosomal subunit. Required for the processing of the 20S rRNA-precursor to mature 18S rRNA in a late step of the maturation of 40S ribosomal subunits. The chain is Small ribosomal subunit protein uS2 from Caenorhabditis briggsae.